Reading from the N-terminus, the 580-residue chain is (3S,6E)-nerolidol synthase 1, chloroplastic (580 aa).

The N-terminal 31 residues, M1 to Q31, are a transit peptide targeting the chloroplast. Positions 334, 338, 478, 482, and 486 each coordinate Mg(2+). The short motif at D334 to D338 is the DDXXD motif element.

This sequence belongs to the terpene synthase family. Tpsg subfamily. Mg(2+) serves as cofactor. Mn(2+) is required as a cofactor.

It localises to the plastid. Its subcellular location is the chloroplast. The enzyme catalyses (2E,6E)-farnesyl diphosphate + H2O = (3S,6E)-nerolidol + diphosphate. The protein operates within secondary metabolite biosynthesis; terpenoid biosynthesis. Its function is as follows. Involved in monoterpene (C10) and sesquiterpene (C15) biosynthesis. Converts geranyl diphosphate (GPP) into S-linalool and farnesyl diphosphate (FPP) into (3S)-E-nerolidol. Probably not expressed in wild strawberry species. The polypeptide is (3S,6E)-nerolidol synthase 1, chloroplastic (Fragaria vesca (Woodland strawberry)).